The sequence spans 892 residues: Putative VWFA domain-containing protein ORF892 (892 aa).

A disordered region spans residues Glu109 to Leu548. Residues Ser129–Asn142 are compositionally biased toward polar residues. The segment covering Gln143 to Glu162 has biased composition (basic and acidic residues). Acidic residues predominate over residues Glu169 to Gln184. Basic and acidic residues predominate over residues Glu185 to Glu196. The span at Glu212–Ser223 shows a compositional bias: acidic residues. Low complexity-rich tracts occupy residues Ser224–Gln238 and Gly271–Gly283. The span at Gly287–Ser300 shows a compositional bias: acidic residues. Low complexity predominate over residues Glu301–Ser323. 2 stretches are compositionally biased toward acidic residues: residues Glu324–Glu336 and Ser425–Glu448. A compositionally biased stretch (low complexity) spans Ser453–Gln466. Polar residues-rich tracts occupy residues Pro467–Arg481 and Gln512–Glu531. A compositionally biased stretch (basic and acidic residues) spans Glu536–Glu546. A coiled-coil region spans residues Gln553–Val620. The VWFA domain occupies Asp723–His892.

In Acidianus two-tailed virus (ATV), this protein is Putative VWFA domain-containing protein ORF892.